A 142-amino-acid polypeptide reads, in one-letter code: Putative pre-16S rRNA nuclease (142 aa).

Belongs to the YqgF nuclease family.

Its subcellular location is the cytoplasm. Functionally, could be a nuclease involved in processing of the 5'-end of pre-16S rRNA. This Chloroflexus aggregans (strain MD-66 / DSM 9485) protein is Putative pre-16S rRNA nuclease.